The sequence spans 112 residues: Nitrogen regulatory protein P-II (112 aa).

Serine 49 bears the Phosphoserine mark. Tyrosine 51 carries the post-translational modification O-UMP-tyrosine.

This sequence belongs to the P(II) protein family. As to quaternary structure, homotrimer. In terms of processing, phosphorylation dependent on the nitrogen source and spectral light quality.

Functionally, P-II indirectly controls the transcription of the GS gene (glnA). P-II prevents NR-II-catalyzed conversion of NR-I to NR-I-phosphate, the transcriptional activator of glnA. When P-II is phosphorylated, these events are reversed. In nitrogen-limiting conditions, when the ratio of Gln to 2-ketoglutarate decreases, P-II is phosphorylated which allows the deadenylation of glutamine synthetase (GS), thus activating the enzyme. The protein is Nitrogen regulatory protein P-II (glnB) of Synechococcus elongatus (strain ATCC 33912 / PCC 7942 / FACHB-805) (Anacystis nidulans R2).